A 645-amino-acid chain; its full sequence is UvrABC system protein B (645 aa).

The 391-residue stretch at 24–414 (AGLNDNKRDQ…LFVEQVIRPT (391 aa)) folds into the Helicase ATP-binding domain. 37-44 (GVTGSGKT) lines the ATP pocket. Positions 90–113 (YYDYYQPEAYLPQTDTYIEKDSVI) match the Beta-hairpin motif. Residues 426-591 (AEAQVYDVVH…VLPKTIIKPI (166 aa)) form the Helicase C-terminal domain. One can recognise a UVR domain in the interval 610–645 (KDTVSSLRKQMLAHAKNLEFEEAAKIKNIIGRINNL).

The protein belongs to the UvrB family. In terms of assembly, forms a heterotetramer with UvrA during the search for lesions. Interacts with UvrC in an incision complex.

It localises to the cytoplasm. The UvrABC repair system catalyzes the recognition and processing of DNA lesions. A damage recognition complex composed of 2 UvrA and 2 UvrB subunits scans DNA for abnormalities. Upon binding of the UvrA(2)B(2) complex to a putative damaged site, the DNA wraps around one UvrB monomer. DNA wrap is dependent on ATP binding by UvrB and probably causes local melting of the DNA helix, facilitating insertion of UvrB beta-hairpin between the DNA strands. Then UvrB probes one DNA strand for the presence of a lesion. If a lesion is found the UvrA subunits dissociate and the UvrB-DNA preincision complex is formed. This complex is subsequently bound by UvrC and the second UvrB is released. If no lesion is found, the DNA wraps around the other UvrB subunit that will check the other stand for damage. The chain is UvrABC system protein B from Wolbachia sp. subsp. Brugia malayi (strain TRS).